The following is a 612-amino-acid chain: 1,8-cineole synthase, chloroplastic (612 aa).

The N-terminal 52 residues, 1–52 (MALVSGAPLASRSCLNKSLISSTHELKPLRRTILPTLRWKSATPSINMCLTT), are a transit peptide targeting the chloroplast. 3 residues coordinate Mg(2+): D363, D367, and D515. The DDXXD motif signature appears at 363–367 (DDIYD).

The protein belongs to the terpene synthase family. Tpsd subfamily. Mg(2+) serves as cofactor. It depends on Mn(2+) as a cofactor.

The protein resides in the plastid. It is found in the chloroplast. The catalysed reaction is (2E)-geranyl diphosphate + H2O = 1,8-cineole + diphosphate. The protein operates within terpene metabolism; oleoresin biosynthesis. Its function is as follows. Terpene synthase (TPS) involved in the biosynthesis of monoterpene natural products included in conifer oleoresin secretions and volatile emissions; these compounds contribute to biotic and abiotic stress defense against herbivores and pathogens. Catalyzes the conversion of (2E)-geranyl diphosphate (GPP) to 1,8-cineole. In Picea engelmannii x Picea glauca (Hybrid white spruce), this protein is 1,8-cineole synthase, chloroplastic.